We begin with the raw amino-acid sequence, 301 residues long: Averufin oxidase A (301 aa).

Residues M1–A23 form the signal peptide. N-linked (GlcNAc...) asparagine glycans are attached at residues N62, N86, and N190.

This sequence belongs to the avfA family.

It participates in mycotoxin biosynthesis. In terms of biological role, averufin oxidase A; part of the fragmented gene cluster that mediates the biosynthesis of dothistromin (DOTH), a polyketide toxin very similar in structure to the aflatoxin precursor, versicolorin B. The first step of the pathway is the conversion of acetate to norsolorinic acid (NOR) and requires the fatty acid synthase subunits hexA and hexB, as well as the polyketide synthase pksA. PksA combines a hexanoyl starter unit and 7 malonyl-CoA extender units to synthesize the precursor NOR. The hexanoyl starter unit is provided to the acyl-carrier protein (ACP) domain by the fungal fatty acid synthase hexA/hexB. The second step is the conversion of NOR to averantin (AVN) and requires the norsolorinic acid ketoreductase nor1, which catalyzes the dehydration of norsolorinic acid to form (1'S)-averantin. The cytochrome P450 monooxygenase avnA then catalyzes the hydroxylation of AVN to 5'hydroxyaverantin (HAVN). The next step is performed by adhA that transforms HAVN to averufin (AVF). Averufin might then be converted to hydroxyversicolorone by cypX and avfA. Hydroxyversicolorone is further converted versiconal hemiacetal acetate (VHA) by moxY. VHA is then the substrate for the versiconal hemiacetal acetate esterase est1 to yield versiconal (VAL). Versicolorin B synthase vbsA then converts VAL to versicolorin B (VERB) by closing the bisfuran ring. Then, the activity of the versicolorin B desaturase verB leads to versicolorin A (VERA). DotB, a predicted chloroperoxidase, may perform epoxidation of the A-ring of VERA. Alternatively, a cytochrome P450, such as cypX or avnA could catalyze this step. It is also possible that another, uncharacterized, cytochrome P450 enzyme is responsible for this step. Opening of the epoxide could potentially be achieved by the epoxide hydrolase epoA. However, epoA seems not to be required for DOTH biosynthesis, but other epoxide hydrolases may have the ability to complement this hydrolysis. Alternatively, opening of the epoxide ring could be achieved non-enzymatically. The next step is the deoxygenation of ring A to yield the 5,8-dihydroxyanthraquinone which is most likely catalyzed by the NADPH dehydrogenase encoded by ver1. The last stages of DOTH biosynthesis are proposed to involve hydroxylation of the bisfuran. OrdB and norB might have oxidative roles here. An alternative possibility is that cytochrome P450 monoogenases such as avnA and cypX might perform these steps in addition to previously proposed steps. This is Averufin oxidase A from Dothistroma septosporum (Red band needle blight fungus).